Here is a 141-residue protein sequence, read N- to C-terminus: Large ribosomal subunit protein uL11 (141 aa).

The protein belongs to the universal ribosomal protein uL11 family. As to quaternary structure, part of the ribosomal stalk of the 50S ribosomal subunit. Interacts with L10 and the large rRNA to form the base of the stalk. L10 forms an elongated spine to which L12 dimers bind in a sequential fashion forming a multimeric L10(L12)X complex. One or more lysine residues are methylated.

Its function is as follows. Forms part of the ribosomal stalk which helps the ribosome interact with GTP-bound translation factors. In Chloroflexus aurantiacus (strain ATCC 29366 / DSM 635 / J-10-fl), this protein is Large ribosomal subunit protein uL11.